Reading from the N-terminus, the 78-residue chain is MRSSVIVAVLVVVALAALLTQGQELKYQEREMVAELAQQIYRVAQAPWAAAVGPHKRNSELINSILGLPKVMNDAGRR.

Positions 1 to 22 are cleaved as a signal peptide; the sequence is MRSSVIVAVLVVVALAALLTQG. A75 is subject to Alanine amide.

Belongs to the arthropod PDH family. Eyestalk sinus gland.

It localises to the secreted. Its function is as follows. The pigment-dispersing hormone causes the migration of the distal retinal pigment into the proximal end of the pigment chromatophore cells and thus decreases the amount of light entering the retinulas. May also function as a neurotransmitter and/or neuromodulator. This chain is Pigment-dispersing hormone 1 peptides (PDH1), found in Callinectes sapidus (Blue crab).